We begin with the raw amino-acid sequence, 134 residues long: Large ribosomal subunit protein bL20 (134 aa).

This sequence belongs to the bacterial ribosomal protein bL20 family.

Functionally, binds directly to 23S ribosomal RNA and is necessary for the in vitro assembly process of the 50S ribosomal subunit. It is not involved in the protein synthesizing functions of that subunit. The polypeptide is Large ribosomal subunit protein bL20 (Rhizobium etli (strain CIAT 652)).